The chain runs to 361 residues: Dual specificity mitogen-activated protein kinase kinase 6 (361 aa).

Basic and acidic residues-rich tracts occupy residues 1–11 (MEGGSDKESKV) and 37–48 (PKELKLPKEVFE). The interval 1 to 61 (MEGGSDKESK…PAPTPPRDLD (61 aa)) is disordered. A d domain region spans residues 30 to 46 (VRGKKKLPKELKLPKEV). Residues 80 to 341 (LEQIGELGRG…YTELMQHPFF (262 aa)) form the Protein kinase domain. Residues 86–94 (LGRGAYGVV) and K109 each bind ATP. D206 functions as the Proton acceptor in the catalytic mechanism. S234 is subject to Phosphoserine; by MAPK3. Phosphothreonine; by MAPK3 is present on T238. The interval 338–361 (HPFFTLHDSKDTDVASFVKTILGD) is DVD domain.

Belongs to the protein kinase superfamily. STE Ser/Thr protein kinase family. MAP kinase kinase subfamily. In terms of assembly, dimer. Interacts (via its D domain) with its MAP kinase substrates. Interacts (via its DVD domain) with MAP3Ks activators. In terms of processing, weakly autophosphorylated. Phosphorylated at Ser-234 and Thr-238 by the majority of M3Ks.

It localises to the nucleus. The protein localises to the cytoplasm. The protein resides in the cytoskeleton. The enzyme catalyses L-seryl-[protein] + ATP = O-phospho-L-seryl-[protein] + ADP + H(+). It carries out the reaction L-threonyl-[protein] + ATP = O-phospho-L-threonyl-[protein] + ADP + H(+). The catalysed reaction is L-tyrosyl-[protein] + ATP = O-phospho-L-tyrosyl-[protein] + ADP + H(+). With respect to regulation, activated by dual phosphorylation on Ser-234 and Thr-238 in response to a variety of cellular stresses, including UV radiation, osmotic shock, hypoxia, inflammatory cytokines, interferon gamma (IFNG), and less often by growth factors. MAP2K6/MKK6 is activated by the majority of M3Ks. Functionally, dual specificity protein kinase which acts as an essential component of the MAP kinase signal transduction pathway. Catalyzes the concomitant phosphorylation of a threonine and a tyrosine residue in the MAP kinases p38 and plays an important role in the regulation of cellular responses to cytokines and all kinds of stresses. The p38 MAP kinase signal transduction pathway leads to direct activation of transcription factors. Phosphorylation by MAP2K6 asymmetrically activates p38 on one side of the blastodisc, an event which is necessary for blastomere cleavage. The protein is Dual specificity mitogen-activated protein kinase kinase 6 of Danio rerio (Zebrafish).